A 367-amino-acid chain; its full sequence is tRNA-specific 2-thiouridylase MnmA (367 aa).

Residues 13 to 20 and methionine 39 each bind ATP; that span reads GLSGGVDS. The segment at 99–101 is interaction with target base in tRNA; sequence NPD. Cysteine 104 functions as the Nucleophile in the catalytic mechanism. A disulfide bond links cysteine 104 and cysteine 200. Glycine 128 is a binding site for ATP. The interval 150–152 is interaction with tRNA; it reads KDQ. Residue cysteine 200 is the Cysteine persulfide intermediate of the active site. Positions 307-308 are interaction with tRNA; it reads RY.

Belongs to the MnmA/TRMU family.

It is found in the cytoplasm. It catalyses the reaction S-sulfanyl-L-cysteinyl-[protein] + uridine(34) in tRNA + AH2 + ATP = 2-thiouridine(34) in tRNA + L-cysteinyl-[protein] + A + AMP + diphosphate + H(+). Functionally, catalyzes the 2-thiolation of uridine at the wobble position (U34) of tRNA, leading to the formation of s(2)U34. In Neisseria meningitidis serogroup C / serotype 2a (strain ATCC 700532 / DSM 15464 / FAM18), this protein is tRNA-specific 2-thiouridylase MnmA.